The sequence spans 443 residues: EP1-like glycoprotein 4 (443 aa).

Residues 1–22 form the signal peptide; it reads MEFSTTLALFFTLSIFLVGAQA. Positions 29-159 constitute a Bulb-type lectin domain; it reads QFRVVNEGGY…NGKFVWQSFD (131 aa). 4 N-linked (GlcNAc...) asparagine glycosylation sites follow: Asn-66, Asn-102, Asn-258, and Asn-269. A WD repeat occupies 254–296; it reads GSQFNVSTFLSRPKHNATLSFLRLESDGNIRVWSYSTLATSTA. One can recognise a PAN domain in the interval 356–433; the sequence is CDPKTFHYFK…TSLVAYVKAP (78 aa). Disulfide bonds link Cys-387–Cys-409 and Cys-391–Cys-397. N-linked (GlcNAc...) asparagine glycosylation occurs at Asn-434.

The protein localises to the secreted. Its subcellular location is the cell wall. This chain is EP1-like glycoprotein 4, found in Arabidopsis thaliana (Mouse-ear cress).